The sequence spans 36 residues: Photosystem I reaction center subunit VIII (36 aa).

A helical membrane pass occupies residues 8 to 28 (SIFVPLVGLVFPAIAIASLFL).

The protein belongs to the PsaI family.

It localises to the plastid. The protein resides in the chloroplast thylakoid membrane. In terms of biological role, may help in the organization of the PsaL subunit. The sequence is that of Photosystem I reaction center subunit VIII from Jasminum nudiflorum (Winter jasmine).